Reading from the N-terminus, the 82-residue chain is ATP synthase subunit c, chloroplastic (82 aa).

2 helical membrane-spanning segments follow: residues 3–23 and 57–77; these read PLIS…ASIG and FAFM…LLFA.

The protein belongs to the ATPase C chain family. F-type ATPases have 2 components, F(1) - the catalytic core - and F(0) - the membrane proton channel. F(1) has five subunits: alpha(3), beta(3), gamma(1), delta(1), epsilon(1). F(0) has four main subunits: a(1), b(1), b'(1) and c(10-14). The alpha and beta chains form an alternating ring which encloses part of the gamma chain. F(1) is attached to F(0) by a central stalk formed by the gamma and epsilon chains, while a peripheral stalk is formed by the delta, b and b' chains.

It is found in the plastid. Its subcellular location is the chloroplast thylakoid membrane. Functionally, f(1)F(0) ATP synthase produces ATP from ADP in the presence of a proton or sodium gradient. F-type ATPases consist of two structural domains, F(1) containing the extramembraneous catalytic core and F(0) containing the membrane proton channel, linked together by a central stalk and a peripheral stalk. During catalysis, ATP synthesis in the catalytic domain of F(1) is coupled via a rotary mechanism of the central stalk subunits to proton translocation. Its function is as follows. Key component of the F(0) channel; it plays a direct role in translocation across the membrane. A homomeric c-ring of between 10-14 subunits forms the central stalk rotor element with the F(1) delta and epsilon subunits. The chain is ATP synthase subunit c, chloroplastic from Mesostigma viride (Green alga).